The primary structure comprises 405 residues: Probable tRNA sulfurtransferase (405 aa).

In terms of domain architecture, THUMP spans 60-165 (DQVMARLSQV…REAIYLSTKT (106 aa)). Residues 183 to 184 (ML), 208 to 209 (HF), arginine 265, glycine 287, and glutamine 296 each bind ATP.

This sequence belongs to the ThiI family.

The protein resides in the cytoplasm. It catalyses the reaction [ThiI sulfur-carrier protein]-S-sulfanyl-L-cysteine + a uridine in tRNA + 2 reduced [2Fe-2S]-[ferredoxin] + ATP + H(+) = [ThiI sulfur-carrier protein]-L-cysteine + a 4-thiouridine in tRNA + 2 oxidized [2Fe-2S]-[ferredoxin] + AMP + diphosphate. The catalysed reaction is [ThiS sulfur-carrier protein]-C-terminal Gly-Gly-AMP + S-sulfanyl-L-cysteinyl-[cysteine desulfurase] + AH2 = [ThiS sulfur-carrier protein]-C-terminal-Gly-aminoethanethioate + L-cysteinyl-[cysteine desulfurase] + A + AMP + 2 H(+). It participates in cofactor biosynthesis; thiamine diphosphate biosynthesis. Catalyzes the ATP-dependent transfer of a sulfur to tRNA to produce 4-thiouridine in position 8 of tRNAs, which functions as a near-UV photosensor. Also catalyzes the transfer of sulfur to the sulfur carrier protein ThiS, forming ThiS-thiocarboxylate. This is a step in the synthesis of thiazole, in the thiamine biosynthesis pathway. The sulfur is donated as persulfide by IscS. In Lacticaseibacillus casei (strain BL23) (Lactobacillus casei), this protein is Probable tRNA sulfurtransferase.